The primary structure comprises 173 residues: NADH-quinone oxidoreductase subunit I 2 (173 aa).

2 consecutive 4Fe-4S ferredoxin-type domains span residues 41–73 (IVLT…LAKA) and 83–112 (EYFR…LTPD). Residues cysteine 53, cysteine 56, cysteine 59, cysteine 63, cysteine 92, cysteine 95, cysteine 98, and cysteine 102 each coordinate [4Fe-4S] cluster. Residues 153-163 (GKDKGEAEHEA) show a composition bias toward basic and acidic residues. Residues 153 to 173 (GKDKGEAEHEAPPVNLKGLLP) are disordered.

The protein belongs to the complex I 23 kDa subunit family. NDH-1 is composed of 14 different subunits. Subunits NuoA, H, J, K, L, M, N constitute the membrane sector of the complex. [4Fe-4S] cluster is required as a cofactor.

It is found in the cell inner membrane. The catalysed reaction is a quinone + NADH + 5 H(+)(in) = a quinol + NAD(+) + 4 H(+)(out). In terms of biological role, NDH-1 shuttles electrons from NADH, via FMN and iron-sulfur (Fe-S) centers, to quinones in the respiratory chain. The immediate electron acceptor for the enzyme in this species is believed to be ubiquinone. Couples the redox reaction to proton translocation (for every two electrons transferred, four hydrogen ions are translocated across the cytoplasmic membrane), and thus conserves the redox energy in a proton gradient. This is NADH-quinone oxidoreductase subunit I 2 from Rhodopseudomonas palustris (strain ATCC BAA-98 / CGA009).